The sequence spans 880 residues: 3-isopropylmalate dehydratase large subunit gloJ (880 aa).

[4Fe-4S] cluster-binding residues include cysteine 457, cysteine 520, and cysteine 523.

This sequence belongs to the aconitase/IPM isomerase family. LeuC type 2 subfamily. It depends on [4Fe-4S] cluster as a cofactor.

It carries out the reaction (2R,3S)-3-isopropylmalate = (2S)-2-isopropylmalate. It functions in the pathway mycotoxin biosynthesis. Functionally, 3-isopropylmalate dehydratase large subunit; part of the gene cluster that mediates the biosynthesis of pneumocandins, lipohexapeptides of the echinocandin family that prevent fungal cell wall formation by non-competitive inhibition of beta-1,3-glucan synthase. The 10,12-dimethylmyristoyl side chain is synthesized by the reducing polyketide synthase gloL/GLPKS4. The thioesterase gloN/GLHYD exclusively interacts with gloL/GLPKS4 to maintain turnover of the polyketide side chain. The 10R,12S-dimethylmyristic acid is then transferred to the first thiolation domain of the nonribosomal peptide synthetase gloA/GLNRPS4 by the acyl-AMP ligase gloD/GLligase, followed by its acylation to L-ornithine to trigger elongation of the cyclic hexapeptide. L-ornithine, 4R-hydroxyl-L-proline (generated from L-proline by the dioxygenase gloF/GLOXY2), 3S-hydroxyl-L-homotyrosine (generated by gloG/GLHtyB, gloH/GLHtyA, gloI/GLHtyC, gloJ/GLHtyD and hydroxylated at C-3 by the dioxygenase gloM/GLOXY1), 3R-hydroxyl-L-glutamine (generated from L-glutamine probably by the dioxygenase gloE/GLOXY3) and 3S-hydroxyl-L-proline (generated from L-proline by the dioxygenase gloF/GLOXY2 to yield pneumocandin B0), or 3S-hydroxyl-4S-methyl-L-proline (generated from L-leucine by the dioxygenase gloC/GLOXY4 to yield pneumocandin A0) are sequentially added to the growing chain. The last C domain of gloA/GLNRPS4 is proposed to be responsible for cyclization by condensation to form the peptide bond between L-ornithine and 3S-hydroxyl-4S-methyl-L-proline (for pneumocandin A0) or 3S-hydroxyl-L-proline (for pneumocandin B0). Finally, the subsequent C-4 hydroxylation of 3S-hydroxyl-L-homotyrosine and L-ornithine dihydroxylation at C-4 and C-5 are performed by the cytochrome P450 monooxygenases gloP/GLP450-1 and gloO/GLP450-2, respectively. In Glarea lozoyensis (strain ATCC 20868 / MF5171), this protein is 3-isopropylmalate dehydratase large subunit gloJ.